A 192-amino-acid chain; its full sequence is Protein GrpE (192 aa).

Residues 1–20 are compositionally biased toward basic and acidic residues; sequence MEERNEQVVEEVKEEVKEAQ. The interval 1–39 is disordered; that stretch reads MEERNEQVVEEVKEEVKEAQVEEAVTSEDSEESVEEKSE. Positions 25–34 are enriched in acidic residues; the sequence is VTSEDSEESV.

It belongs to the GrpE family. Homodimer.

It localises to the cytoplasm. Functionally, participates actively in the response to hyperosmotic and heat shock by preventing the aggregation of stress-denatured proteins, in association with DnaK and GrpE. It is the nucleotide exchange factor for DnaK and may function as a thermosensor. Unfolded proteins bind initially to DnaJ; upon interaction with the DnaJ-bound protein, DnaK hydrolyzes its bound ATP, resulting in the formation of a stable complex. GrpE releases ADP from DnaK; ATP binding to DnaK triggers the release of the substrate protein, thus completing the reaction cycle. Several rounds of ATP-dependent interactions between DnaJ, DnaK and GrpE are required for fully efficient folding. This is Protein GrpE from Bacillus cereus (strain ATCC 10987 / NRS 248).